The chain runs to 355 residues: 4-hydroxy-3-methylbut-2-en-1-yl diphosphate synthase (flavodoxin) (355 aa).

Residues Cys-266, Cys-269, Cys-301, and Glu-308 each contribute to the [4Fe-4S] cluster site.

This sequence belongs to the IspG family. [4Fe-4S] cluster is required as a cofactor.

The enzyme catalyses (2E)-4-hydroxy-3-methylbut-2-enyl diphosphate + oxidized [flavodoxin] + H2O + 2 H(+) = 2-C-methyl-D-erythritol 2,4-cyclic diphosphate + reduced [flavodoxin]. It functions in the pathway isoprenoid biosynthesis; isopentenyl diphosphate biosynthesis via DXP pathway; isopentenyl diphosphate from 1-deoxy-D-xylulose 5-phosphate: step 5/6. Its function is as follows. Converts 2C-methyl-D-erythritol 2,4-cyclodiphosphate (ME-2,4cPP) into 1-hydroxy-2-methyl-2-(E)-butenyl 4-diphosphate. The sequence is that of 4-hydroxy-3-methylbut-2-en-1-yl diphosphate synthase (flavodoxin) from Caldanaerobacter subterraneus subsp. tengcongensis (strain DSM 15242 / JCM 11007 / NBRC 100824 / MB4) (Thermoanaerobacter tengcongensis).